The chain runs to 623 residues: Glucokinase regulatory protein (623 aa).

2 SIS domains span residues Val-90 to Val-286 and Val-320 to Phe-476. Beta-D-fructose 1-phosphate-binding positions include Thr-109–Ser-110, Glu-153, and Ser-179–Gly-181. Thr-109 to Ser-110 is a binding site for beta-D-fructose 6-phosphate. Position 179–181 (Ser-179–Gly-181) interacts with beta-D-fructose 6-phosphate. The segment at Ala-199–Val-200 is important for interaction with GCK. Glu-348 is a binding site for beta-D-fructose 1-phosphate. The tract at residues Leu-463–Phe-465 is essential for interaction with GCK.

Belongs to the GCKR family. Interacts (fructose 6-phosphate bound form) with GCK.

Its subcellular location is the cytoplasm. It localises to the nucleus. The protein localises to the mitochondrion. Functionally, regulates glucokinase (GCK) by forming an inactive complex with this enzyme. Acts by promoting GCK recruitment to the nucleus, possibly to provide a reserve of GCK that can be quickly released in the cytoplasm after a meal. The affinity of GCKR for GCK is modulated by fructose metabolites: GCKR with bound fructose 6-phosphate has increased affinity for GCK, while GCKR with bound fructose 1-phosphate has strongly decreased affinity for GCK and does not inhibit GCK activity. This Mus musculus (Mouse) protein is Glucokinase regulatory protein.